The following is a 189-amino-acid chain: Interferon alpha-6 (189 aa).

The N-terminal stretch at 1–20 (MALPFALLMALVVLSCKSSC) is a signal peptide. Intrachain disulfides connect Cys24-Cys122 and Cys52-Cys162.

This sequence belongs to the alpha/beta interferon family.

It localises to the secreted. Produced by macrophages, IFN-alpha have antiviral activities. Interferon stimulates the production of two enzymes: a protein kinase and an oligoadenylate synthetase. The protein is Interferon alpha-6 (IFNA6) of Homo sapiens (Human).